The sequence spans 256 residues: uncharacterized protein (256 aa).

Disordered regions lie at residues 1 to 171 and 185 to 256; these read MARG…QLKH and NGQR…LYND. Residues 14-39 are a coiled coil; it reads KRRSKVQEEEEHVEGSEEEVEEPEQK. 2 stretches are compositionally biased toward acidic residues: residues 21–35 and 64–92; these read EEEE…EVEE and SDDD…DNDE. The span at 108–129 shows a compositional bias: basic and acidic residues; it reads NRGDHESHDDNSDNEEQGDRGN. Over residues 192–205 the composition is skewed to gly residues; sequence KRGGPPRGSFGQRG. Basic and acidic residues predominate over residues 219-234; that stretch reads RQGDTRDTRDTRDTRL.

This is an uncharacterized protein from Acanthamoeba polyphaga (Amoeba).